Here is a 793-residue protein sequence, read N- to C-terminus: Kinesin-like protein KIF3C (793 aa).

Residues 10–365 form the Kinesin motor domain; sequence ALKVVARCRP…LRFANRAKNI (356 aa). 97 to 104 provides a ligand contact to ATP; it reads GQTGTGKT. Disordered regions lie at residues 251–288, 395–423, and 756–793; these read ERQN…ERPK, EKRG…GYPE, and KVRK…ADHE. Residues 270-284 are compositionally biased toward gly residues; the sequence is GGSGGGGGSGGGAGG. Residues 376–630 adopt a coiled-coil conformation; that stretch reads KDTLLREFQE…QNEQTRELKL (255 aa). A compositionally biased stretch (basic residues) spans 399–413; it reads MLGKRPRRKSSRGKK. The interval 631–793 is globular; sequence KYLIIENFIP…LRPATVADHE (163 aa).

The protein belongs to the TRAFAC class myosin-kinesin ATPase superfamily. Kinesin family. Kinesin II subfamily. As to quaternary structure, heterodimer of KIF3A and KIF3C.

Its subcellular location is the cytoplasm. The protein resides in the cytoskeleton. In terms of biological role, microtubule-based anterograde translocator for membranous organelles. In Pongo abelii (Sumatran orangutan), this protein is Kinesin-like protein KIF3C (KIF3C).